Consider the following 716-residue polypeptide: Fatty acid oxidation complex subunit alpha (716 aa).

Residues 1–189 (MIYQSPTIQV…KVGAVDSVVA (189 aa)) are enoyl-CoA hydratase/isomerase. Substrate is bound at residue Asp296. The interval 311–716 (KEVNNAAVLG…AANNGSYYQA (406 aa)) is 3-hydroxyacyl-CoA dehydrogenase. Residues Met324, Asp343, 400–402 (VVE), Lys407, and Ser429 each bind NAD(+). His450 functions as the For 3-hydroxyacyl-CoA dehydrogenase activity in the catalytic mechanism. Residue Asn453 coordinates NAD(+). Substrate contacts are provided by Asn500 and Tyr660.

In the N-terminal section; belongs to the enoyl-CoA hydratase/isomerase family. This sequence in the C-terminal section; belongs to the 3-hydroxyacyl-CoA dehydrogenase family. In terms of assembly, heterotetramer of two alpha chains (FadB) and two beta chains (FadA).

It carries out the reaction a (3S)-3-hydroxyacyl-CoA + NAD(+) = a 3-oxoacyl-CoA + NADH + H(+). It catalyses the reaction a (3S)-3-hydroxyacyl-CoA = a (2E)-enoyl-CoA + H2O. The catalysed reaction is a 4-saturated-(3S)-3-hydroxyacyl-CoA = a (3E)-enoyl-CoA + H2O. The enzyme catalyses (3S)-3-hydroxybutanoyl-CoA = (3R)-3-hydroxybutanoyl-CoA. It carries out the reaction a (3Z)-enoyl-CoA = a 4-saturated (2E)-enoyl-CoA. It catalyses the reaction a (3E)-enoyl-CoA = a 4-saturated (2E)-enoyl-CoA. It participates in lipid metabolism; fatty acid beta-oxidation. Involved in the aerobic and anaerobic degradation of long-chain fatty acids via beta-oxidation cycle. Catalyzes the formation of 3-oxoacyl-CoA from enoyl-CoA via L-3-hydroxyacyl-CoA. It can also use D-3-hydroxyacyl-CoA and cis-3-enoyl-CoA as substrate. The polypeptide is Fatty acid oxidation complex subunit alpha (Shewanella baltica (strain OS185)).